We begin with the raw amino-acid sequence, 507 residues long: Maturase K (507 aa).

The protein belongs to the intron maturase 2 family. MatK subfamily.

It localises to the plastid. It is found in the chloroplast. Functionally, usually encoded in the trnK tRNA gene intron. Probably assists in splicing its own and other chloroplast group II introns. In Fagopyrum esculentum (Common buckwheat), this protein is Maturase K.